We begin with the raw amino-acid sequence, 493 residues long: Lysine--tRNA ligase (493 aa).

Mg(2+) is bound by residues Glu400 and Glu407.

It belongs to the class-II aminoacyl-tRNA synthetase family. As to quaternary structure, homodimer. It depends on Mg(2+) as a cofactor.

It is found in the cytoplasm. It carries out the reaction tRNA(Lys) + L-lysine + ATP = L-lysyl-tRNA(Lys) + AMP + diphosphate. The sequence is that of Lysine--tRNA ligase from Syntrophomonas wolfei subsp. wolfei (strain DSM 2245B / Goettingen).